The primary structure comprises 252 residues: Uridylate kinase (252 aa).

ATP is bound at residue 20–23; sequence KLSG. The segment at 28–33 is involved in allosteric activation by GTP; that stretch reads GGGGLG. Position 62 (Gly62) interacts with UMP. ATP-binding residues include Gly63 and Arg67. Residues Asp82 and 143–150 each bind UMP; that span reads MGMPYFST. Residues Asn171, Tyr177, and Asp180 each contribute to the ATP site.

It belongs to the UMP kinase family. As to quaternary structure, homohexamer.

It localises to the cytoplasm. It catalyses the reaction UMP + ATP = UDP + ADP. The protein operates within pyrimidine metabolism; CTP biosynthesis via de novo pathway; UDP from UMP (UMPK route): step 1/1. Its activity is regulated as follows. Allosterically activated by GTP. Inhibited by UTP. In terms of biological role, catalyzes the reversible phosphorylation of UMP to UDP. In Streptomyces avermitilis (strain ATCC 31267 / DSM 46492 / JCM 5070 / NBRC 14893 / NCIMB 12804 / NRRL 8165 / MA-4680), this protein is Uridylate kinase.